We begin with the raw amino-acid sequence, 701 residues long: MTEDGIKWACEYCTFENWPSAIKCTMCRAPRPSGAIITEEPFKNRTPDVGSMEREIGSPLICPDSSARPRVKSSYSMETSSKWSCQICTYLNWPRAIRCTQCLSQRRTRSPTESPQSSGSGLRSIPGPIDPCEEYNDRNKLNIKGQHWTCSACTYENCAKAKKCVVCDHPTPNNMDAIELANTDEASSIINEQDRARWRGGCSSSNSQRRSPPTSKRDSDMDFQRIELAGAVGSKEEFELDLKKLKQIKNRMRKTDWLFLNACVGVVEGDLSAVEAYKTSGGDIARQLSADEVRLLNRPSAFDVGYTLVHLSIRFQRQDMLAILLTEVAQHAAKCIPAMVCPELTEQIRREIAASVHQRKGDFACYFLTDLVTFTLPADIEDLPPTVQEKLFDEVLDRDVQKELEEESPIINWSLELGTRLDSRLYALWNRTAGDCLLDSVLQATWGIYDKDSVLRKALHDSLRDCSHWFYSRWKEWESWYSQSFGLHFSLREEQWQEDWAFILSLASQPGASLEQTHIFVLAHILRRPIIVYGVKYYKSFRGETLGYTRFQGVYLPLLWEQSFCWKSPIALGYTRGHFSALVAMENDGFDNRGAGANLNTDDDVTVTFLPLVDSERKLLHVHFLSAQELGNEDQQEKLLREWMDCCVTEGGVLVAMQKSSRRRNHPLVTQMVEKWLDGYRQIRPCTALSDGEEDEDDEDE.

RanBP2-type zinc fingers lie at residues Glu3–Ser33, Thr79–Thr108, and Ile143–Asn173. Residues Cys10, Cys13, Cys24, Cys27, Cys85, Cys88, Cys99, and Cys102 each contribute to the Zn(2+) site. The span at Thr108–Gly121 shows a compositional bias: polar residues. Residues Thr108–Ile129 form a disordered region. Cys150, Cys153, Cys164, and Cys167 together coordinate Zn(2+). A disordered region spans residues Arg197–Asp220. Positions Cys202–Thr214 are enriched in polar residues. ANK repeat units lie at residues Arg253–Asp283 and Tyr306–Ala333. The region spanning Leu425 to Met585 is the OTU domain. Catalysis depends on Cys436, which acts as the Nucleophile. The active-site Proton acceptor is the His578.

The protein belongs to the peptidase C64 family.

The protein localises to the cytoplasm. It is found in the nucleus. It catalyses the reaction Thiol-dependent hydrolysis of ester, thioester, amide, peptide and isopeptide bonds formed by the C-terminal Gly of ubiquitin (a 76-residue protein attached to proteins as an intracellular targeting signal).. Ubiquitin thioesterase, which specifically hydrolyzes 'Lys-29'-linked and 'Lys-33'-linked diubiquitin. Also cleaves 'Lys-63'-linked chains, but with 40-fold less efficiency compared to 'Lys-29'-linked ones. Positive regulator of the Wnt signaling pathway that deubiquitinates apc protein, a negative regulator of Wnt-mediated transcription. Acts as a regulator of autophagy by mediating deubiquitination of pik3c3/vps34, thereby promoting autophagosome maturation. Plays a role in the regulation of cell morphology and cytoskeletal organization. Required in the stress fiber dynamics and cell migration. The chain is Ubiquitin thioesterase zranb1-B (zranb1-b) from Xenopus laevis (African clawed frog).